Here is a 238-residue protein sequence, read N- to C-terminus: Thiamine import ATP-binding protein ThiQ (238 aa).

One can recognise an ABC transporter domain in the interval Met1–Leu234. Gly36–Ser43 is an ATP binding site.

It belongs to the ABC transporter superfamily. Thiamine importer (TC 3.A.1.19.1) family. As to quaternary structure, the complex is composed of two ATP-binding proteins (ThiQ), two transmembrane proteins (ThiP) and a solute-binding protein (ThiB).

The protein localises to the cell inner membrane. The enzyme catalyses thiamine(out) + ATP + H2O = thiamine(in) + ADP + phosphate + H(+). Part of the ABC transporter complex ThiBPQ involved in thiamine import. Responsible for energy coupling to the transport system. In Rhizobium meliloti (strain 1021) (Ensifer meliloti), this protein is Thiamine import ATP-binding protein ThiQ.